The following is a 348-amino-acid chain: Major outer membrane protein P.IB (348 aa).

A signal peptide spans 1–19; the sequence is MKKSLIALTLAALPVAATA.

It belongs to the Gram-negative porin family. As to quaternary structure, homotrimer.

The protein localises to the cell outer membrane. Serves as a slightly cation selective porin. Major antigen on the gonococcal cell surface and it may have pathogenic properties in addition to its porin activity. This chain is Major outer membrane protein P.IB (porB), found in Neisseria gonorrhoeae.